The chain runs to 163 residues: Lectin-like protein EP153R (163 aa).

The Cytoplasmic portion of the chain corresponds to 1–26 (MFSNKKYIGLINKKEGLKKKIDDYSI). Residues 27-47 (LIIGILIGTNILSLIINIIGE) traverse the membrane as a helical segment. Topologically, residues 48–163 (INKPICYQNN…YTDLLFICSK (116 aa)) are extracellular. A disulfide bridge links C63 with C74. The interval 63-162 (CPKDWVGYNN…HYTDLLFICS (100 aa)) is lectin-like. N-linked (GlcNAc...) asparagine; by host glycosylation is found at N84, N96, N97, N103, N109, N115, N129, and N135. C92 and C161 form a disulfide bridge.

It belongs to the asfivirus lectin-like protein family. Homodimer.

It is found in the host endoplasmic reticulum membrane. Its function is as follows. Down-regulates MHC-I expression by impairing the appropriate configuration or presentation into the plasma membrane of the latter. Participates in viral hemadsorption, which may help viral spread. Reduces the transactivating activity of host TP53, thus inhibiting apoptosis. Non-essential for virus growth in swine macrophage cell cultures. This African swine fever virus (isolate Warthog/Namibia/Wart80/1980) (ASFV) protein is Lectin-like protein EP153R.